Here is a 635-residue protein sequence, read N- to C-terminus: Bifunctional lysine-specific demethylase and histidyl-hydroxylase NO66 (635 aa).

Disordered regions lie at residues 1-115 and 141-190; these read MSAV…LQNS and FNGE…KANG. Over residues 84–99 the composition is skewed to low complexity; it reads ASASDINTSASKNVNA. The span at 141 to 156 shows a compositional bias: polar residues; the sequence is FNGESLKNNSNHSTPV. The region spanning 295-440 is the JmjC domain; sequence CSIRMLNPQT…DLLELFFPHA (146 aa). 3 residues coordinate Fe cation: histidine 341, aspartate 343, and histidine 406.

This sequence belongs to the ROX family. NO66 subfamily. Fe(2+) is required as a cofactor.

It is found in the nucleus. It catalyses the reaction N(6),N(6)-dimethyl-L-lysyl(36)-[histone H3] + 2 2-oxoglutarate + 2 O2 = L-lysyl(36)-[histone H3] + 2 formaldehyde + 2 succinate + 2 CO2. Functionally, oxygenase that can act as both a histone lysine demethylase and a ribosomal histidine hydroxylase. Specifically demethylates 'Lys-4' (H3K4me) and 'Lys-36' (H3K36me) of histone H3, thereby playing a central role in histone code. The sequence is that of Bifunctional lysine-specific demethylase and histidyl-hydroxylase NO66 from Aedes aegypti (Yellowfever mosquito).